The chain runs to 203 residues: Dephospho-CoA kinase (203 aa).

The region spanning 6–203 is the DPCK domain; sequence KVAITGGLSC…ELYQELKIYI (198 aa). ATP is bound at residue 14–19; sequence SCGKSS.

It belongs to the CoaE family.

The protein localises to the cytoplasm. The enzyme catalyses 3'-dephospho-CoA + ATP = ADP + CoA + H(+). It participates in cofactor biosynthesis; coenzyme A biosynthesis; CoA from (R)-pantothenate: step 5/5. Functionally, catalyzes the phosphorylation of the 3'-hydroxyl group of dephosphocoenzyme A to form coenzyme A. In Protochlamydia amoebophila (strain UWE25), this protein is Dephospho-CoA kinase.